The following is a 188-amino-acid chain: Elongation factor P (188 aa).

The residue at position 34 (K34) is an N6-(3,6-diaminohexanoyl)-5-hydroxylysine.

The protein belongs to the elongation factor P family. May be beta-lysylated on the epsilon-amino group of Lys-34 by the combined action of EpmA and EpmB, and then hydroxylated on the C5 position of the same residue by EpmC (if this protein is present). Lysylation is critical for the stimulatory effect of EF-P on peptide-bond formation. The lysylation moiety may extend toward the peptidyltransferase center and stabilize the terminal 3-CCA end of the tRNA. Hydroxylation of the C5 position on Lys-34 may allow additional potential stabilizing hydrogen-bond interactions with the P-tRNA.

It localises to the cytoplasm. Its pathway is protein biosynthesis; polypeptide chain elongation. In terms of biological role, involved in peptide bond synthesis. Alleviates ribosome stalling that occurs when 3 or more consecutive Pro residues or the sequence PPG is present in a protein, possibly by augmenting the peptidyl transferase activity of the ribosome. Modification of Lys-34 is required for alleviation. The polypeptide is Elongation factor P (Actinobacillus succinogenes (strain ATCC 55618 / DSM 22257 / CCUG 43843 / 130Z)).